The following is an 820-amino-acid chain: G-type lectin S-receptor-like serine/threonine-protein kinase At1g11300 (820 aa).

The first 26 residues, Met1–Ala26, serve as a signal peptide directing secretion. Positions Gln27–Phe150 constitute a Bulb-type lectin domain. Residues Gln27–Pro436 are Extracellular-facing. Residues Asn37, Asn58, Asn87, Asn115, Asn123, Asn173, Asn211, Asn247, Asn256, and Asn282 are each glycosylated (N-linked (GlcNAc...) asparagine). One can recognise an EGF-like; atypical domain in the interval Pro290–Ile326. 2 cysteine pairs are disulfide-bonded: Cys294/Cys306 and Cys300/Cys314. Asn332 and Asn351 each carry an N-linked (GlcNAc...) asparagine glycan. In terms of domain architecture, PAN spans Cys345–Ala425. Intrachain disulfides connect Cys379–Cys400 and Cys383–Cys389. Asn404 is a glycosylation site (N-linked (GlcNAc...) asparagine). The helical transmembrane segment at Ile437–Ala457 threads the bilayer. The Cytoplasmic segment spans residues Arg458–Arg820. The Protein kinase domain occupies Phe509 to Phe788. ATP contacts are provided by residues Leu515–Val523 and Lys537. Residues Arg598–Ile615 form a caM-binding region. The active-site Proton acceptor is the Asp634.

Belongs to the protein kinase superfamily. Ser/Thr protein kinase family.

It localises to the cell membrane. It catalyses the reaction L-seryl-[protein] + ATP = O-phospho-L-seryl-[protein] + ADP + H(+). The enzyme catalyses L-threonyl-[protein] + ATP = O-phospho-L-threonyl-[protein] + ADP + H(+). This Arabidopsis thaliana (Mouse-ear cress) protein is G-type lectin S-receptor-like serine/threonine-protein kinase At1g11300.